Reading from the N-terminus, the 328-residue chain is Ribosomal RNA small subunit methyltransferase H (328 aa).

Residues Gly-35–His-37, Asp-60, Phe-87, Asp-113, and Gln-120 each bind S-adenosyl-L-methionine.

Belongs to the methyltransferase superfamily. RsmH family.

It localises to the cytoplasm. The catalysed reaction is cytidine(1402) in 16S rRNA + S-adenosyl-L-methionine = N(4)-methylcytidine(1402) in 16S rRNA + S-adenosyl-L-homocysteine + H(+). In terms of biological role, specifically methylates the N4 position of cytidine in position 1402 (C1402) of 16S rRNA. The sequence is that of Ribosomal RNA small subunit methyltransferase H from Chlorobium chlorochromatii (strain CaD3).